A 227-amino-acid chain; its full sequence is Large ribosomal subunit protein uL3 (227 aa).

At glutamine 158 the chain carries N5-methylglutamine.

This sequence belongs to the universal ribosomal protein uL3 family. Part of the 50S ribosomal subunit. Forms a cluster with proteins L14 and L19. Post-translationally, methylated by PrmB.

One of the primary rRNA binding proteins, it binds directly near the 3'-end of the 23S rRNA, where it nucleates assembly of the 50S subunit. This is Large ribosomal subunit protein uL3 from Polaromonas sp. (strain JS666 / ATCC BAA-500).